Here is a 113-residue protein sequence, read N- to C-terminus: Protein Asterix (113 aa).

Residues 81-97 form a helical membrane-spanning segment; sequence IVSSFMLSVSAVVMSYL.

This sequence belongs to the Asterix family.

Its subcellular location is the membrane. The polypeptide is Protein Asterix (Caenorhabditis elegans).